We begin with the raw amino-acid sequence, 191 residues long: MSQTITLIKDKILSDNYFTLRNITYDLTRRNGEVIRHKREVYDRGNGATILLYNSTKKTVLLVRQFRVATWVNGNQDGMLIETCAGLLDNDEPEVCIRKEAIEETGYDVGEVRKIFELYMSPGGVTELIHFFIAEYHDSERASIGGGVEDEEIEVLELPFSRALEMVRSGEIRDGKTVLLLNYLQTSHLMD.

GDP-alpha-D-mannose contacts are provided by residues tyrosine 17, 38–40 (KRE), arginine 67, and 85–87 (AGL). Residues 43 to 180 (DRGNGATILL…EIRDGKTVLL (138 aa)) enclose the Nudix hydrolase domain. Alanine 85, glutamate 100, and glutamate 104 together coordinate Mg(2+). Positions 86-106 (GLLDNDEPEVCIRKEAIEETG) match the Nudix box motif. Residues glutamate 104, glutamate 127, 150-151 (DE), and lysine 176 contribute to the GDP-alpha-D-mannose site. Glutamate 151 is a binding site for Mg(2+).

It belongs to the Nudix hydrolase family. NudK subfamily. In terms of assembly, homodimer. The cofactor is Mg(2+).

The enzyme catalyses GDP-alpha-D-mannose + H2O = alpha-D-mannose 1-phosphate + GMP + 2 H(+). In terms of biological role, nucleoside diphosphate sugar hydrolase that hydrolyzes GDP-mannose as its preferred substrate, yielding GMP and mannose-1-phosphate. This chain is GDP-mannose pyrophosphatase (nudK), found in Salmonella choleraesuis (strain SC-B67).